The sequence spans 446 residues: tRNA-2-methylthio-N(6)-dimethylallyladenosine synthase (446 aa).

Residues 3 to 119 (KKIFIKTFGC…INEAILNHLK (117 aa)) form the MTTase N-terminal domain. The [4Fe-4S] cluster site is built by Cys12, Cys48, Cys82, Cys158, Cys162, and Cys165. The 231-residue stretch at 144 to 374 (KDSKVSSFLT…QEKLFNNQIK (231 aa)) folds into the Radical SAM core domain. The region spanning 377–439 (KSLENKILNV…QNSLFGKLTE (63 aa)) is the TRAM domain.

This sequence belongs to the methylthiotransferase family. MiaB subfamily. Monomer. Requires [4Fe-4S] cluster as cofactor.

The protein resides in the cytoplasm. The catalysed reaction is N(6)-dimethylallyladenosine(37) in tRNA + (sulfur carrier)-SH + AH2 + 2 S-adenosyl-L-methionine = 2-methylsulfanyl-N(6)-dimethylallyladenosine(37) in tRNA + (sulfur carrier)-H + 5'-deoxyadenosine + L-methionine + A + S-adenosyl-L-homocysteine + 2 H(+). Its function is as follows. Catalyzes the methylthiolation of N6-(dimethylallyl)adenosine (i(6)A), leading to the formation of 2-methylthio-N6-(dimethylallyl)adenosine (ms(2)i(6)A) at position 37 in tRNAs that read codons beginning with uridine. This chain is tRNA-2-methylthio-N(6)-dimethylallyladenosine synthase, found in Pelagibacter ubique (strain HTCC1062).